Here is a 447-residue protein sequence, read N- to C-terminus: Tubulin beta-6 chain (447 aa).

GTP-binding residues include Gln-11, Glu-69, Ser-138, Gly-142, Thr-143, Gly-144, Asn-204, and Asn-226. Position 69 (Glu-69) interacts with Mg(2+). Residues 426–447 are disordered; that stretch reads QDATAEEEGEFDEDEELDDGMM. Residues 429-447 show a composition bias toward acidic residues; sequence TAEEEGEFDEDEELDDGMM.

It belongs to the tubulin family. As to quaternary structure, dimer of alpha and beta chains. A typical microtubule is a hollow water-filled tube with an outer diameter of 25 nm and an inner diameter of 15 nM. Alpha-beta heterodimers associate head-to-tail to form protofilaments running lengthwise along the microtubule wall with the beta-tubulin subunit facing the microtubule plus end conferring a structural polarity. Microtubules usually have 13 protofilaments but different protofilament numbers can be found in some organisms and specialized cells. The cofactor is Mg(2+).

The protein resides in the cytoplasm. Its subcellular location is the cytoskeleton. Functionally, tubulin is the major constituent of microtubules, a cylinder consisting of laterally associated linear protofilaments composed of alpha- and beta-tubulin heterodimers. Microtubules grow by the addition of GTP-tubulin dimers to the microtubule end, where a stabilizing cap forms. Below the cap, tubulin dimers are in GDP-bound state, owing to GTPase activity of alpha-tubulin. This is Tubulin beta-6 chain (TUBB6) from Ectocarpus variabilis (Brown alga).